A 340-amino-acid chain; its full sequence is Pilin (340 aa).

The signal sequence occupies residues 1 to 23 (MKLRHLLLTGAALTSFAATTVHG). Cross-links (isoaspartyl lysine isopeptide (Lys-Asn)) lie at residues 36–168 (KNLD…QFKN) and 179–303 (KKVS…TFTN). A Threonyl lysine isopeptide (Lys-Thr) (interchain with T-311) cross-link involves residue K161. The short motif at 308 to 312 (EVPTG) is the EVPTG sorting signal element. A Pentaglycyl murein peptidoglycan amidated threonine; alternate modification is found at T311. T311 is covalently cross-linked (Threonyl lysine isopeptide (Thr-Lys) (interchain with K-161); alternate). The propeptide at 312–340 (GVAMTVAPYIALGIVAVGGALYFVKKKNA) is removed by sortase C1.

Belongs to the Streptococcus pilin family. As to quaternary structure, forms columns of about 3-nanometers in diameter of head-to-tail-assembled molecules. Proteolytically processed and assembled in pili through a transpeptidation reaction catalyzed by the sortase C1. The last pilin subunit is cross-linked to the peptidoglycan.

It localises to the secreted. Its subcellular location is the cell wall. It is found in the fimbrium. In terms of biological role, major component of the pilus. A stack of the pilin subunits, joined by intermolecular isopeptide bonds, forms the pilus. The pilus is required for bacterial adhesion to host cells, for bacterial aggregation, and for biofilm formation. This chain is Pilin, found in Streptococcus pyogenes serotype M1.